Consider the following 398-residue polypeptide: Endoglucanase (398 aa).

A signal peptide spans 1–23; sequence MSPLKCMALAALGAVMFVGSAQA. The active-site Proton donor is the Glu-58. The active-site Nucleophile is the Asp-119.

Belongs to the glycosyl hydrolase 8 (cellulase D) family.

It localises to the secreted. It catalyses the reaction Endohydrolysis of (1-&gt;4)-beta-D-glucosidic linkages in cellulose, lichenin and cereal beta-D-glucans.. It participates in glycan metabolism; bacterial cellulose biosynthesis. Its function is as follows. Hydrolyzes carboxymethylcellulose. This Pseudomonas fluorescens (strain SBW25) protein is Endoglucanase (bcsZ).